Consider the following 320-residue polypeptide: Glucokinase (320 aa).

The protein belongs to the ROK (NagC/XylR) family. As to quaternary structure, monomer. The cofactor is a divalent metal cation.

It carries out the reaction D-glucose + ATP = D-glucose 6-phosphate + ADP + H(+). Catalyzes the phosphorylation of D-glucose to D-glucose 6-phosphate using ATP as the phosphate donor. ITP can also serve as an effective phosphoryl donor. According to Hansen et al., the enzyme has a broad hexose specificity, and in addition to glucose, which shows the highest catalytic efficiency, it can also phosphorylate fructose, mannose, glucosamine, N-acetylglucosamine, N-acetylmannosamine and 2-deoxyglucose. However, according to Sakuraba et al., the enzyme shows strict specificity for D-glucose. In Aeropyrum pernix (strain ATCC 700893 / DSM 11879 / JCM 9820 / NBRC 100138 / K1), this protein is Glucokinase.